Here is a 477-residue protein sequence, read N- to C-terminus: Actin-related protein 7 (477 aa).

The protein belongs to the actin family. In terms of assembly, forms a heterodimer with ARP9. Interacts with NPL6. Component of the two forms of the RSC complex composed of at least either RSC1 or RSC2, and ARP7, ARP9, LDB7, NPL6, RSC3, RSC30, RSC4, RSC58, RSC6, RSC8, RSC9, SFH1, STH1, HTL1 and probably RTT102. The complexes interact with histone and histone variant components of centromeric chromatin. Component of the SWI/SNF global transcription activator complex. The 1.14 MDa SWI/SNF complex is composed of 11 different subunits: one copy each of SWI1, SNF2/SWI2, SNF5, SNF12/SWP73, ARP7/SWP61, ARP9/SWP59; two copies each of SWI3, SNF6, SNF11, SWP82; and three copies of TAF14/SWP29.

The protein localises to the nucleus. Its function is as follows. Component of the chromatin structure remodeling complex (RSC), which is involved in transcription regulation and nucleosome positioning. RSC is responsible for the transfer of a histone octamer from a nucleosome core particle to naked DNA. The reaction requires ATP and involves an activated RSC-nucleosome intermediate. Remodeling reaction also involves DNA translocation, DNA twist and conformational change. As a reconfigurer of centromeric and flanking nucleosomes, RSC complex is required both for proper kinetochore function in chromosome segregation and, via a PKC1-dependent signaling pathway, for organization of the cellular cytoskeleton. This subunit is involved in transcriptional regulation. Heterodimer of ARP7 and ARP9 functions with HMG box proteins to facilitate proper chromatin architecture. Heterodimer formation is necessary for assembly into RSC complex. Part of the SWI/SNF complex, an ATP-dependent chromatin remodeling complex, is required for the positive and negative regulation of gene expression of a large number of genes. It changes chromatin structure by altering DNA-histone contacts within a nucleosome, leading eventually to a change in nucleosome position, thus facilitating or repressing binding of gene-specific transcription factors. The chain is Actin-related protein 7 (ARP7) from Saccharomyces cerevisiae (strain ATCC 204508 / S288c) (Baker's yeast).